Consider the following 207-residue polypeptide: Ribosomal RNA small subunit methyltransferase G (207 aa).

Residues glycine 74, leucine 79, 125 to 126, and arginine 140 each bind S-adenosyl-L-methionine; that span reads VE.

This sequence belongs to the methyltransferase superfamily. RNA methyltransferase RsmG family.

The protein resides in the cytoplasm. The catalysed reaction is guanosine(527) in 16S rRNA + S-adenosyl-L-methionine = N(7)-methylguanosine(527) in 16S rRNA + S-adenosyl-L-homocysteine. Functionally, specifically methylates the N7 position of guanine in position 527 of 16S rRNA. This is Ribosomal RNA small subunit methyltransferase G from Shewanella loihica (strain ATCC BAA-1088 / PV-4).